We begin with the raw amino-acid sequence, 380 residues long: Ceramide synthase 2 (380 aa).

Residues 1–40 (MLQTLYDYFWWERLWLPVNLTWADLEDKDGRVYAKASDLY) lie on the Lumenal side of the membrane. An N-linked (GlcNAc...) asparagine glycan is attached at Asn-19. A helical transmembrane segment spans residues 41–61 (ITLPLALLFLVIRYFFELYVA). The segment at 67–128 (LLNVKEKTRL…RRRRNQDRPS (62 aa)) is homeobox-like. The TLC domain occupies 131 to 332 (KKFREASWRF…ILRMAHKFIT (202 aa)). 4 helical membrane passes run 140 to 160 (FTYYLIAFVAGMAVTVDKPWF), 175 to 195 (IIPSQYWYYMIELSFYWSLLF), 209 to 229 (QIIHHVATIILLCFSWFANYV), and 264 to 284 (LFIVFAIVFIITRLVIMPFWI). The Last loop motif signature appears at 291–300 (YPLELYPAFF). A helical membrane pass occupies residues 304–324 (FFNFMMAVLQMLHIFWAYFIL). The Cytoplasmic segment spans residues 325 to 380 (RMAHKFITGKLIEDERSDREETESSEGEETAAGAGAKSRLLANGHPILNNNHPKND). Residues 340 to 380 (RSDREETESSEGEETAAGAGAKSRLLANGHPILNNNHPKND) are disordered. At Ser-341 the chain carries Phosphoserine. The span at 344 to 353 (EETESSEGEE) shows a compositional bias: acidic residues. Thr-346 is subject to Phosphothreonine. Phosphoserine is present on residues Ser-348 and Ser-349.

As to quaternary structure, interacts with ATP6V0C, ASGR1, ASGR2 and SLC22A1/OCT1. Interacts with ELOV1, HSD17B12 and TECR. Interacts with NDUFS2. Interacts with PAQR4; the interaction regulates the stability and activity of CERS2 and is inhibited in presence of ceramides. Acetylated. Deacetylation by SIRT3 increases enzyme activity and promotes mitochondrial ceramide accumulation. In terms of processing, phosphorylated at the C-terminus by CK2, leading to increase the ceramide synthase activity. As to expression, broadly expressed, with highest levels in liver and kidney. In brain is detected in neurons, oligodentrocytes, ependymal cells and epithelial cells of the choroid plexus. In kidney is detected in collecting ducts and to a lesser degree in proximal tubules.

It is found in the endoplasmic reticulum membrane. The enzyme catalyses a very long-chain fatty acyl-CoA + a sphingoid base = an N-(very-long-chain fatty acyl)-sphingoid base + CoA + H(+). The catalysed reaction is docosanoyl-CoA + sphinganine = N-docosanoylsphinganine + CoA + H(+). It catalyses the reaction tetracosanoyl-CoA + sphinganine = N-tetracosanoylsphinganine + CoA + H(+). It carries out the reaction hexacosanoyl-CoA + sphinganine = N-hexacosanoylsphinganine + CoA + H(+). The enzyme catalyses (15Z)-tetracosenoyl-CoA + sphinganine = N-(15Z-tetracosenoyl)-sphinganine + CoA + H(+). The catalysed reaction is 2-hydroxytetracosanoyl-CoA + sphinganine = N-(2-hydroxytetracosanoyl)-sphinganine + CoA + H(+). It catalyses the reaction 2-hydroxydocosanoyl-CoA + sphinganine = N-(2-hydroxydocosanoyl)-sphinganine + CoA + H(+). It carries out the reaction 2-hydroxytetracosenoyl-CoA + sphinganine = N-(2-hydroxytetracosenoyl)-sphinganine + CoA + H(+). The enzyme catalyses tetracosenoyl-CoA + sphinganine = an N-tetracosenoylsphinganine + CoA + H(+). The catalysed reaction is hexacosenoyl-CoA + sphinganine = N-hexacosenoylsphinganine + CoA + H(+). It catalyses the reaction tetracosanoyl-CoA + sphing-4-enine = N-tetracosanoyl-sphing-4-enine + CoA + H(+). It carries out the reaction tetracosenoyl-CoA + sphing-4-enine = N-(tetracosenoyl)-sphing-4-enine + CoA + H(+). The enzyme catalyses heptadecasphing-4-enine + tetracosanoyl-CoA = N-tetracosanoyl-heptadecasphing-4-enine + CoA + H(+). The catalysed reaction is a fatty acyl-CoA + sphing-4-enine = an N-acylsphing-4-enine + CoA + H(+). It catalyses the reaction sphing-4-enine + hexadecanoyl-CoA = N-hexadecanoylsphing-4-enine + CoA + H(+). It carries out the reaction sphing-4-enine + octadecanoyl-CoA = N-octadecanoylsphing-4-enine + CoA + H(+). The enzyme catalyses eicosanoyl-CoA + sphing-4-enine = N-eicosanoyl-sphing-4-enine + CoA + H(+). The catalysed reaction is sphinganine + hexadecanoyl-CoA = N-hexadecanoylsphinganine + CoA + H(+). It catalyses the reaction sphinganine + octadecanoyl-CoA = N-(octadecanoyl)-sphinganine + CoA + H(+). It carries out the reaction sphinganine + (9Z)-octadecenoyl-CoA = N-(9Z-octadecenoyl)-sphinganine + CoA + H(+). The enzyme catalyses eicosanoyl-CoA + sphinganine = N-eicosanoylsphinganine + CoA + H(+). It participates in lipid metabolism; sphingolipid metabolism. Ceramide synthase activity is inhibited by sphingosine-1-phosphate. Its function is as follows. Ceramide synthase that catalyzes the transfer of the acyl chain from acyl-CoA to a sphingoid base, with high selectivity toward very-long-chain fatty acyl-CoA (chain length C22-C27). N-acylates sphinganine and sphingosine bases to form dihydroceramides and ceramides in de novo synthesis and salvage pathways, respectively. Plays a non-redundant role in the synthesis of ceramides with very-long-chain fatty acids in kidney, liver and brain. Regulates the abundance of myelin-specific sphingolipids galactosylceramide and sulfatide that affects myelin sheath architecture and motor neuron functions. The chain is Ceramide synthase 2 from Mus musculus (Mouse).